A 453-amino-acid polypeptide reads, in one-letter code: MSWRTTTAILCLYGAVKEFRPATPFLTPFLASPEKNITLDELYSQVYPYWTYSYMLALIPMFILTDILRYKPIVMIEAIGLVATWALLVFGKGVWQMQIMQVSFGVASAAEIAYYSYIYSIVDRKHYKRATSYIRAAALMGKLVAFGLGQTLISTHTSDYLVLNQISLGAVCLVTIIAIFLPRVKSEKAKVSMRAHEIVEQQTVESVESVQTPKAVKMSYTREYFKKISEELQICSKNQELLKWSLWWALASCGVYQVQNYTQSLWKELQNNPDDVANGVVEFVNTALGAFLSLFIHHLSIDWTRHGQMILFITSAIVAVLLYLCSQTTTVLVAYSSYVVITSIYHMLITAASANVAKELSSNNHGLIFGCNTFVAVCLQSLLTLVVVDSRFLHLDIRTQFVIYSGYFALVASIFAFFFMISLFSKSSNAHTAQTTYEATNEIQEETVFLDQN.

Asparagine 36 carries an N-linked (GlcNAc...) asparagine glycan. A run of 5 helical transmembrane segments spans residues 48 to 68, 73 to 93, 102 to 122, 136 to 156, and 161 to 181; these read PYWT…TDIL, IVMI…FGKG, VSFG…YSIV, AAAL…ISTH, and LVLN…AIFL. Asparagine 260 is a glycosylation site (N-linked (GlcNAc...) asparagine). 5 helical membrane passes run 276-296, 306-326, 331-351, 368-388, and 401-421; these read VANG…SLFI, HGQM…YLCS, VLVA…LITA, IFGC…LVVV, and FVIY…FFMI.

Belongs to the reduced folate carrier (RFC) transporter (TC 2.A.48) family. In terms of tissue distribution, highly expressed in pharynx and posterior part of the intestine. Expressed at lower levels in the body wall muscles, head muscles, and vulva muscles. Highly expressed in the intestine of the early larva, levels decrease in the later stages of development.

Its subcellular location is the membrane. In terms of biological role, folate transporter. In Caenorhabditis elegans, this protein is Folate transporter 1 (folt-1).